The primary structure comprises 254 residues: Geranylgeranylglyceryl phosphate synthase (254 aa).

D28 and S57 together coordinate Mg(2+). Sn-glycerol 1-phosphate contacts are provided by residues 176–182 (YLEAGSG), 207–208 (GG), and 229–230 (GT).

Belongs to the GGGP/HepGP synthase family. Group II subfamily. Mg(2+) serves as cofactor.

Its subcellular location is the cytoplasm. It carries out the reaction sn-glycerol 1-phosphate + (2E,6E,10E)-geranylgeranyl diphosphate = sn-3-O-(geranylgeranyl)glycerol 1-phosphate + diphosphate. Its pathway is membrane lipid metabolism; glycerophospholipid metabolism. Prenyltransferase that catalyzes the transfer of the geranylgeranyl moiety of geranylgeranyl diphosphate (GGPP) to the C3 hydroxyl of sn-glycerol-1-phosphate (G1P). This reaction is the first ether-bond-formation step in the biosynthesis of archaeal membrane lipids. The sequence is that of Geranylgeranylglyceryl phosphate synthase from Pyrococcus horikoshii (strain ATCC 700860 / DSM 12428 / JCM 9974 / NBRC 100139 / OT-3).